Here is a 55-residue protein sequence, read N- to C-terminus: Large ribosomal subunit protein bL33 (55 aa).

Belongs to the bacterial ribosomal protein bL33 family.

This Ruegeria pomeroyi (strain ATCC 700808 / DSM 15171 / DSS-3) (Silicibacter pomeroyi) protein is Large ribosomal subunit protein bL33.